Here is an 86-residue protein sequence, read N- to C-terminus: Cell division topological specificity factor (86 aa).

The protein belongs to the MinE family.

Functionally, prevents the cell division inhibition by proteins MinC and MinD at internal division sites while permitting inhibition at polar sites. This ensures cell division at the proper site by restricting the formation of a division septum at the midpoint of the long axis of the cell. The sequence is that of Cell division topological specificity factor from Shewanella woodyi (strain ATCC 51908 / MS32).